The chain runs to 307 residues: NAD kinase 1 (307 aa).

D67 (proton acceptor) is an active-site residue. NAD(+)-binding positions include 67–68 (DG), 149–150 (ND), R179, and D181.

It belongs to the NAD kinase family. A divalent metal cation serves as cofactor.

The protein resides in the cytoplasm. It carries out the reaction NAD(+) + ATP = ADP + NADP(+) + H(+). Involved in the regulation of the intracellular balance of NAD and NADP, and is a key enzyme in the biosynthesis of NADP. Catalyzes specifically the phosphorylation on 2'-hydroxyl of the adenosine moiety of NAD to yield NADP. In Prochlorococcus marinus (strain SARG / CCMP1375 / SS120), this protein is NAD kinase 1.